The following is a 628-amino-acid chain: tRNA uridine 5-carboxymethylaminomethyl modification enzyme MnmG (628 aa).

Residues 11-16 (GAGHAG), V123, and S178 contribute to the FAD site. 271–285 (GPRYCPSIETKIVTF) is an NAD(+) binding site. Q368 contributes to the FAD binding site.

The protein belongs to the MnmG family. In terms of assembly, homodimer. Heterotetramer of two MnmE and two MnmG subunits. It depends on FAD as a cofactor.

It localises to the cytoplasm. Its function is as follows. NAD-binding protein involved in the addition of a carboxymethylaminomethyl (cmnm) group at the wobble position (U34) of certain tRNAs, forming tRNA-cmnm(5)s(2)U34. The chain is tRNA uridine 5-carboxymethylaminomethyl modification enzyme MnmG from Bacteroides thetaiotaomicron (strain ATCC 29148 / DSM 2079 / JCM 5827 / CCUG 10774 / NCTC 10582 / VPI-5482 / E50).